The sequence spans 119 residues: Ribonuclease P protein component (119 aa).

This sequence belongs to the RnpA family. Consists of a catalytic RNA component (M1 or rnpB) and a protein subunit.

It catalyses the reaction Endonucleolytic cleavage of RNA, removing 5'-extranucleotides from tRNA precursor.. Functionally, RNaseP catalyzes the removal of the 5'-leader sequence from pre-tRNA to produce the mature 5'-terminus. It can also cleave other RNA substrates such as 4.5S RNA. The protein component plays an auxiliary but essential role in vivo by binding to the 5'-leader sequence and broadening the substrate specificity of the ribozyme. The polypeptide is Ribonuclease P protein component (Clostridium acetobutylicum (strain ATCC 824 / DSM 792 / JCM 1419 / IAM 19013 / LMG 5710 / NBRC 13948 / NRRL B-527 / VKM B-1787 / 2291 / W)).